The primary structure comprises 249 residues: Type III pantothenate kinase (249 aa).

8 to 15 lines the ATP pocket; that stretch reads DAGNSRLK. Substrate is bound by residues Y95 and 102–105; that span reads GVDR. Catalysis depends on D104, which acts as the Proton acceptor. D125 contributes to the K(+) binding site. Residue T128 coordinates ATP. Residue T179 coordinates substrate.

This sequence belongs to the type III pantothenate kinase family. As to quaternary structure, homodimer. The cofactor is NH4(+). K(+) serves as cofactor.

It localises to the cytoplasm. The catalysed reaction is (R)-pantothenate + ATP = (R)-4'-phosphopantothenate + ADP + H(+). It participates in cofactor biosynthesis; coenzyme A biosynthesis; CoA from (R)-pantothenate: step 1/5. In terms of biological role, catalyzes the phosphorylation of pantothenate (Pan), the first step in CoA biosynthesis. In Alkalilimnicola ehrlichii (strain ATCC BAA-1101 / DSM 17681 / MLHE-1), this protein is Type III pantothenate kinase.